The chain runs to 391 residues: Glutamate 5-kinase (391 aa).

Residue Lys17 participates in ATP binding. Positions 57, 144, and 156 each coordinate substrate. ATP-binding positions include 176 to 177 (SD) and 216 to 222 (TGGMTTK). A PUA domain is found at 278–356 (QGQIVIDDGA…AWLAAEMGPA (79 aa)). Positions 370 to 391 (SRRRKAEPSSRNQKSSGSRVTS) are disordered. A compositionally biased stretch (polar residues) spans 378–391 (SSRNQKSSGSRVTS).

Belongs to the glutamate 5-kinase family.

It localises to the cytoplasm. The catalysed reaction is L-glutamate + ATP = L-glutamyl 5-phosphate + ADP. The protein operates within amino-acid biosynthesis; L-proline biosynthesis; L-glutamate 5-semialdehyde from L-glutamate: step 1/2. Catalyzes the transfer of a phosphate group to glutamate to form L-glutamate 5-phosphate. The protein is Glutamate 5-kinase of Cutibacterium acnes (strain DSM 16379 / KPA171202) (Propionibacterium acnes).